A 283-amino-acid polypeptide reads, in one-letter code: 2-heptyl-4(1H)-quinolone synthase subunit PqsB (283 aa).

It belongs to the thiolase-like superfamily. FabH family. As to quaternary structure, forms a tight complex with PqsC.

The protein resides in the cytoplasm. Its activity is regulated as follows. Activity of the complex is inhibited by 2-aminoacetophenone (2-AA). Required for the biosynthesis of the quorum-sensing signaling molecules 2-heptyl-4(1H)-quinolone (HHQ) and 2-heptyl-3-hydroxy-4(1H)-quinolone (Pseudomonas quinolone signal or PQS), which are important for biofilm formation and virulence. The PqsC/PqsB complex catalyzes the condensation of 2-aminobenzoylacetate (2-ABA) and octanoyl-CoA to form HHQ. PqsB, together with PqsC, catalyzes the coupling of 2-ABA with the octanoate group, leading to decarboxylation and dehydration, and resulting in closure of the quinoline ring. PqsB is probably required for the proper folding of PqsC rather than for a direct enzymatic role in the process. This Pseudomonas aeruginosa (strain ATCC 15692 / DSM 22644 / CIP 104116 / JCM 14847 / LMG 12228 / 1C / PRS 101 / PAO1) protein is 2-heptyl-4(1H)-quinolone synthase subunit PqsB.